We begin with the raw amino-acid sequence, 338 residues long: tRNA N6-adenosine threonylcarbamoyltransferase (338 aa).

Residues His114 and His118 each contribute to the Fe cation site. Substrate is bound by residues 136 to 140, Asp169, Gly182, Asp186, and Asn275; that span reads LVSGG. Asp301 provides a ligand contact to Fe cation.

Belongs to the KAE1 / TsaD family. Fe(2+) serves as cofactor.

It localises to the cytoplasm. The enzyme catalyses L-threonylcarbamoyladenylate + adenosine(37) in tRNA = N(6)-L-threonylcarbamoyladenosine(37) in tRNA + AMP + H(+). Functionally, required for the formation of a threonylcarbamoyl group on adenosine at position 37 (t(6)A37) in tRNAs that read codons beginning with adenine. Is involved in the transfer of the threonylcarbamoyl moiety of threonylcarbamoyl-AMP (TC-AMP) to the N6 group of A37, together with TsaE and TsaB. TsaD likely plays a direct catalytic role in this reaction. The polypeptide is tRNA N6-adenosine threonylcarbamoyltransferase (Streptococcus equi subsp. zooepidemicus (strain MGCS10565)).